The sequence spans 413 residues: Tyrosine--tRNA ligase (413 aa).

The short motif at 59 to 68 (PTAPDIHLGH) is the 'HIGH' region element. The short motif at 243 to 247 (KMSKS) is the 'KMSKS' region element. Residue K246 coordinates ATP. An S4 RNA-binding domain is found at 351–411 (LAIGQLLKQA…GKRRFARVTL (61 aa)).

Belongs to the class-I aminoacyl-tRNA synthetase family. TyrS type 2 subfamily. As to quaternary structure, homodimer.

The protein localises to the cytoplasm. The enzyme catalyses tRNA(Tyr) + L-tyrosine + ATP = L-tyrosyl-tRNA(Tyr) + AMP + diphosphate + H(+). Functionally, catalyzes the attachment of tyrosine to tRNA(Tyr) in a two-step reaction: tyrosine is first activated by ATP to form Tyr-AMP and then transferred to the acceptor end of tRNA(Tyr). The protein is Tyrosine--tRNA ligase of Burkholderia pseudomallei (strain 1710b).